The sequence spans 529 residues: MFTVMTRQPCEQAGFRALSRTPAIVTLVVLLVSIVVLVTLTLIQIRHPQVLPPGLKYGVVLDAGSSRTTVYVYQWPAEKENNTGVVSQTFRCSVKGSGISSYENNPQDAPKAFEDCILKVKEQVPEHLHGSTRIYLGATAGMRLLRLQNETAAREVLESIQSYFKSQPFDFRGAQIISGQEEGVYGWITANYIMGNFLEKNLWHMWVHPHGVDTTGALDLGGASTQISFVAGEKMEPNASDTVQVSLYGYTYTLYTHSFQCYGQNEAEKKFLAMLLQSPSTEANISNPCYPQGYSTAFTLGHVFGSLCTEKQRPESYNSSKSVTFMGTGDPRLCREKVASVFDFNACQEQDACSFDGIYQPKVQGPFVAFAGFYYTASALNLSGSFSLTSFNDSSWDFCRHTWSELPALLSRFDETYARSYCFSAHYIYHLLVNGYKFTEETWPQIRFEKEVGNSSIAWSLGYMLSLTNQIPAGSPLIHLPIQPPVFMGVLAFFTAIALLCLAFLLYLCSSFRTKERSENAFDQAVDSD.

Over 1–22 (MFTVMTRQPCEQAGFRALSRTP) the chain is Cytoplasmic. The helical transmembrane segment at 23–43 (AIVTLVVLLVSIVVLVTLTLI) threads the bilayer. The Extracellular portion of the chain corresponds to 44-485 (QIRHPQVLPP…PLIHLPIQPP (442 aa)). An N-linked (GlcNAc...) asparagine glycan is attached at Asn81. A disulfide bridge connects residues Cys92 and Cys116. Asn149 is a glycosylation site (N-linked (GlcNAc...) asparagine). The active-site Proton acceptor is Glu182. 222–226 (GASTQ) is a binding site for ATP. N-linked (GlcNAc...) asparagine glycosylation is found at Asn238, Asn284, and Asn318. 3 disulfide bridges follow: Cys261-Cys308, Cys289-Cys334, and Cys347-Cys353. Residues Asn381 and Asn392 are each glycosylated (N-linked (GlcNAc...) asparagine). Cysteines 399 and 422 form a disulfide. N-linked (GlcNAc...) asparagine glycosylation is present at Asn454. A helical membrane pass occupies residues 486-506 (VFMGVLAFFTAIALLCLAFLL). The Cytoplasmic portion of the chain corresponds to 507–529 (YLCSSFRTKERSENAFDQAVDSD).

The protein belongs to the GDA1/CD39 NTPase family. It depends on Ca(2+) as a cofactor. Requires Mg(2+) as cofactor.

It localises to the cell membrane. It catalyses the reaction a ribonucleoside 5'-triphosphate + 2 H2O = a ribonucleoside 5'-phosphate + 2 phosphate + 2 H(+). Catalyzes the hydrolysis of nucleoside triphosphates and diphosphates. Has a threefold preference for the hydrolysis of ATP and UTP over ADP and UDP. In Mus musculus (Mouse), this protein is Ectonucleoside triphosphate diphosphohydrolase 3.